Consider the following 424-residue polypeptide: Enolase (424 aa).

Glutamine 162 is a (2R)-2-phosphoglycerate binding site. Glutamate 204 functions as the Proton donor in the catalytic mechanism. Mg(2+)-binding residues include aspartate 241, glutamate 284, and aspartate 311. Residues lysine 336, arginine 365, serine 366, and lysine 387 each coordinate (2R)-2-phosphoglycerate. Lysine 336 (proton acceptor) is an active-site residue.

The protein belongs to the enolase family. Mg(2+) is required as a cofactor.

Its subcellular location is the cytoplasm. The protein localises to the secreted. The protein resides in the cell surface. The catalysed reaction is (2R)-2-phosphoglycerate = phosphoenolpyruvate + H2O. The protein operates within carbohydrate degradation; glycolysis; pyruvate from D-glyceraldehyde 3-phosphate: step 4/5. In terms of biological role, catalyzes the reversible conversion of 2-phosphoglycerate (2-PG) into phosphoenolpyruvate (PEP). It is essential for the degradation of carbohydrates via glycolysis. In Parvibaculum lavamentivorans (strain DS-1 / DSM 13023 / NCIMB 13966), this protein is Enolase.